The sequence spans 290 residues: MFKGSIVALVTPFRDGAVDEETLRRMVDYQIENGTDGISPCGTTGEASTLDYDEHMRVIEIVIQQVNGRVPVIAGTGSNSTTEAIELSRKAKKLGADGVLLVSPYYNKPSQEGLYRHFRAIADAVDIPQVLYNVPGRTGVNMLPQTVARLAEHDSIVAIKEATGSLQQASELMEMCGDKIDVISGDDFITFPMMACGATGVISVVANIMPREVARLVDAFYEGDMDEARRLHLSLLNISNAMFIETNPVPVKTAAALMGLCAEELRLPLAPLGDASRATLCAVMKSYGLI.

T44 contributes to the pyruvate binding site. The active-site Proton donor/acceptor is the Y132. K160 serves as the catalytic Schiff-base intermediate with substrate. I202 contributes to the pyruvate binding site.

Belongs to the DapA family. In terms of assembly, homotetramer; dimer of dimers.

It is found in the cytoplasm. The catalysed reaction is L-aspartate 4-semialdehyde + pyruvate = (2S,4S)-4-hydroxy-2,3,4,5-tetrahydrodipicolinate + H2O + H(+). Its pathway is amino-acid biosynthesis; L-lysine biosynthesis via DAP pathway; (S)-tetrahydrodipicolinate from L-aspartate: step 3/4. Its function is as follows. Catalyzes the condensation of (S)-aspartate-beta-semialdehyde [(S)-ASA] and pyruvate to 4-hydroxy-tetrahydrodipicolinate (HTPA). The protein is 4-hydroxy-tetrahydrodipicolinate synthase of Pelobacter propionicus (strain DSM 2379 / NBRC 103807 / OttBd1).